Here is a 446-residue protein sequence, read N- to C-terminus: Phosphoglucosamine mutase (446 aa).

The active-site Phosphoserine intermediate is Ser100. Ser100, Asp239, Asp241, and Asp243 together coordinate Mg(2+). Ser100 carries the phosphoserine modification.

It belongs to the phosphohexose mutase family. It depends on Mg(2+) as a cofactor. In terms of processing, activated by phosphorylation.

It catalyses the reaction alpha-D-glucosamine 1-phosphate = D-glucosamine 6-phosphate. Catalyzes the conversion of glucosamine-6-phosphate to glucosamine-1-phosphate. This chain is Phosphoglucosamine mutase, found in Oceanobacillus iheyensis (strain DSM 14371 / CIP 107618 / JCM 11309 / KCTC 3954 / HTE831).